A 354-amino-acid chain; its full sequence is Homer protein homolog 2 (354 aa).

Residues 1-110 (MGEQPIFTTR…EKFQEVREAA (110 aa)) enclose the WH1 domain. Positions 92–120 (SEQQLTKFAEKFQEVREAARLARDKSQEK) form a coiled coil. The disordered stretch occupies residues 114 to 163 (RDKSQEKIETSSNHSQESGCETPSSTQASSVNGTDDEKASHASPADTHLK). A compositionally biased stretch (polar residues) spans 123–146 (TSSNHSQESGCETPSSTQASSVNG). Residues 160-329 (THLKSENDKL…RHLKGELKSF (170 aa)) adopt a coiled-coil conformation.

The protein belongs to the Homer family. As to quaternary structure, isoform 1 and isoform 2 encode coiled-coil structures that mediate homo- and heteromultimerization. Interacts with NFATC2; interaction is reduced by AKT activation. Interacts with NFATC1 and NFATC4. Interacts with DAGLA (via PPXXF motif); this interaction is required for the cell membrane localization of DAGLA. Constitutively expressed in the adult hippocampus.

The protein resides in the cytoplasm. The protein localises to the cell membrane. Its subcellular location is the postsynaptic density. It is found in the synapse. It localises to the cell projection. The protein resides in the stereocilium. In terms of biological role, postsynaptic density scaffolding protein. Binds and cross-links cytoplasmic regions of GRM1, GRM5, ITPR1, DNM3, RYR1, RYR2, SHANK1 and SHANK3. By physically linking GRM1 and GRM5 with ER-associated ITPR1 receptors, it aids the coupling of surface receptors to intracellular calcium release. May also couple GRM1 to PI3 kinase through its interaction with AGAP2. Isoforms can be differently regulated and may play an important role in maintaining the plasticity at glutamatergic synapses. Required for normal hearing. Negatively regulates T cell activation by inhibiting the calcineurin-NFAT pathway. Acts by competing with calcineurin/PPP3CA for NFAT protein binding, hence preventing NFAT activation by PPP3CA. This is Homer protein homolog 2 from Rattus norvegicus (Rat).